Consider the following 385-residue polypeptide: Putative transport protein MT1133 (385 aa).

Helical transmembrane passes span 7–27 (LTQKRALAILTLIALLFGAYF), 32–52 (FVLIVVAAVGAYLFTPLFKWF), 66–86 (LLSALAAVVVPVGALVGLAIV), 159–179 (SLAGVITSAIIFVYVFVALLV), 218–238 (FVIAACQGVAGAASIYIAGFH), 241–261 (FFIFAIVLTALSIIPLGGGIV), 263–283 (IPFGIGMIFYGNIAGGIFVLL), and 319–339 (GITMFGPWGIIIGPVLMILIV).

Belongs to the autoinducer-2 exporter (AI-2E) (TC 2.A.86) family.

The protein resides in the cell membrane. This is Putative transport protein MT1133 from Mycobacterium tuberculosis (strain CDC 1551 / Oshkosh).